Consider the following 316-residue polypeptide: MELWNFTLGSGFILVGILNDSGSPELLCATITILYLLALISNGLLLLAITMEARLHMPMYLLLGQLSLMDLLFTSVVTPKALADFLRRENTISFGGCALQMFLALTMGGAEDLLLAFMAYDRYVAICHPLTYMTLMSSRACWLMVATSWILASLSALIYTVYTMHYPFCRAQEIRHLLCEIPHLLKVACADTSRYELMVYVMGVTFLIPSLAAILASYTQILLTVLHMPSNEGRKKALVTCSSHLTVVGMFYGAATFMYVLPSSFHSTRQDNIISVFYTIVTPALNPLIYSLRNKEVMRALRRVLGKYMLPAHSTL.

Topologically, residues 1 to 25 (MELWNFTLGSGFILVGILNDSGSPE) are extracellular. N-linked (GlcNAc...) asparagine glycans are attached at residues Asn-5 and Asn-19. Residues 26–49 (LLCATITILYLLALISNGLLLLAI) traverse the membrane as a helical segment. The Cytoplasmic portion of the chain corresponds to 50–57 (TMEARLHM). The chain crosses the membrane as a helical span at residues 58–79 (PMYLLLGQLSLMDLLFTSVVTP). Residues 80 to 100 (KALADFLRRENTISFGGCALQ) are Extracellular-facing. A disulfide bridge links Cys-97 with Cys-189. Residues 101 to 120 (MFLALTMGGAEDLLLAFMAY) traverse the membrane as a helical segment. Topologically, residues 121–139 (DRYVAICHPLTYMTLMSSR) are cytoplasmic. The helical transmembrane segment at 140–158 (ACWLMVATSWILASLSALI) threads the bilayer. Residues 159 to 195 (YTVYTMHYPFCRAQEIRHLLCEIPHLLKVACADTSRY) lie on the Extracellular side of the membrane. Residues 196 to 219 (ELMVYVMGVTFLIPSLAAILASYT) traverse the membrane as a helical segment. Residues 220 to 236 (QILLTVLHMPSNEGRKK) lie on the Cytoplasmic side of the membrane. The chain crosses the membrane as a helical span at residues 237–259 (ALVTCSSHLTVVGMFYGAATFMY). At 260 to 272 (VLPSSFHSTRQDN) the chain is on the extracellular side. The helical transmembrane segment at 273-292 (IISVFYTIVTPALNPLIYSL) threads the bilayer. Residues 293-316 (RNKEVMRALRRVLGKYMLPAHSTL) are Cytoplasmic-facing.

It belongs to the G-protein coupled receptor 1 family.

The protein resides in the cell membrane. In terms of biological role, odorant receptor. This chain is Olfactory receptor 2AG1 (OR2AG1), found in Homo sapiens (Human).